We begin with the raw amino-acid sequence, 646 residues long: Calcium-dependent protein kinase 2 (646 aa).

Glycine 2 carries N-myristoyl glycine lipidation. The S-palmitoyl cysteine moiety is linked to residue cysteine 5. The tract at residues 27–169 (RIGAEQASSS…HMRRVSSAGL (143 aa)) is disordered. Over residues 32–43 (QASSSSHGNGQV) the composition is skewed to polar residues. Basic and acidic residues-rich tracts occupy residues 73 to 119 (PETK…KREV) and 126 to 157 (AKPE…EPQK). Residues 186–444 (YSLGRKLGQG…AHQVLCHPWV (259 aa)) enclose the Protein kinase domain. Residues 192 to 200 (LGQGQFGTT) and lysine 215 each bind ATP. The active-site Proton acceptor is aspartate 310. At serine 350 the chain carries Phosphoserine. Residues 450 to 480 (APDKPLDSAVLSRMKQFSAMNKFKKMALRVI) are autoinhibitory domain. EF-hand domains follow at residues 487-522 (EEIA…VGAN), 523-558 (LKES…LNKI), 559-592 (ERED…EEFG), and 593-628 (VEDA…GSIM). The Ca(2+) site is built by aspartate 500, aspartate 502, serine 504, glutamine 506, glutamate 511, aspartate 536, aspartate 538, serine 540, threonine 542, glutamate 547, aspartate 572, aspartate 574, serine 576, glutamate 583, aspartate 606, aspartate 608, aspartate 610, arginine 612, and glutamate 617.

This sequence belongs to the protein kinase superfamily. Ser/Thr protein kinase family. CDPK subfamily. As to quaternary structure, interacts with 14-3-3 proteins.

The protein localises to the endoplasmic reticulum membrane. The catalysed reaction is L-seryl-[protein] + ATP = O-phospho-L-seryl-[protein] + ADP + H(+). The enzyme catalyses L-threonyl-[protein] + ATP = O-phospho-L-threonyl-[protein] + ADP + H(+). With respect to regulation, activated by calcium. Autophosphorylation may play an important role in the regulation of the kinase activity. In terms of biological role, may play a role in signal transduction pathways that involve calcium as a second messenger. This Arabidopsis thaliana (Mouse-ear cress) protein is Calcium-dependent protein kinase 2 (CPK2).